The following is a 189-amino-acid chain: Potassium-transporting ATPase KdpC subunit (189 aa).

A helical transmembrane segment spans residues 11 to 31 (LFVLLTVITGVLYPVFVTGLA).

The protein belongs to the KdpC family. As to quaternary structure, the system is composed of three essential subunits: KdpA, KdpB and KdpC.

The protein resides in the cell inner membrane. Functionally, part of the high-affinity ATP-driven potassium transport (or Kdp) system, which catalyzes the hydrolysis of ATP coupled with the electrogenic transport of potassium into the cytoplasm. This subunit acts as a catalytic chaperone that increases the ATP-binding affinity of the ATP-hydrolyzing subunit KdpB by the formation of a transient KdpB/KdpC/ATP ternary complex. The polypeptide is Potassium-transporting ATPase KdpC subunit (Polynucleobacter asymbioticus (strain DSM 18221 / CIP 109841 / QLW-P1DMWA-1) (Polynucleobacter necessarius subsp. asymbioticus)).